A 601-amino-acid polypeptide reads, in one-letter code: ATP-dependent lipid A-core flippase (601 aa).

Positions 28 to 328 (LLSVVGLIVY…LTRVNAEFQR (301 aa)) constitute an ABC transmembrane type-1 domain. 6 helical membrane passes run 32–52 (VGLI…GPFI), 81–101 (VLLM…FANF), 160–180 (ALIS…LMFY), 183–203 (WKLS…ITIV), 267–287 (AVSQ…VLYA), and 296–316 (DLTA…LQPI). The region spanning 360 to 597 (LRFDNVSFSY…GGMYAKLYQM (238 aa)) is the ABC transporter domain. 394 to 401 (GRSGSGKS) is an ATP binding site.

This sequence belongs to the ABC transporter superfamily. Lipid exporter (TC 3.A.1.106) family. In terms of assembly, homodimer.

Its subcellular location is the cell inner membrane. It carries out the reaction ATP + H2O + lipid A-core oligosaccharideSide 1 = ADP + phosphate + lipid A-core oligosaccharideSide 2.. Functionally, involved in lipopolysaccharide (LPS) biosynthesis. Translocates lipid A-core from the inner to the outer leaflet of the inner membrane. Transmembrane domains (TMD) form a pore in the inner membrane and the ATP-binding domain (NBD) is responsible for energy generation. The protein is ATP-dependent lipid A-core flippase of Shewanella oneidensis (strain ATCC 700550 / JCM 31522 / CIP 106686 / LMG 19005 / NCIMB 14063 / MR-1).